Here is a 332-residue protein sequence, read N- to C-terminus: Ornithine carbamoyltransferase 1, catabolic (332 aa).

Residues 56-59, Q83, R107, and 134-137 contribute to the carbamoyl phosphate site; these read STRT and HPTQ. L-ornithine contacts are provided by residues N167, D231, and 235 to 236; that span reads SM. Carbamoyl phosphate is bound by residues 273 to 274 and R318; that span reads CL.

It belongs to the aspartate/ornithine carbamoyltransferase superfamily. OTCase family.

The protein localises to the cytoplasm. It carries out the reaction carbamoyl phosphate + L-ornithine = L-citrulline + phosphate + H(+). It participates in amino-acid degradation; L-arginine degradation via ADI pathway; carbamoyl phosphate from L-arginine: step 2/2. In terms of biological role, reversibly catalyzes the transfer of the carbamoyl group from carbamoyl phosphate (CP) to the N(epsilon) atom of ornithine (ORN) to produce L-citrulline. The protein is Ornithine carbamoyltransferase 1, catabolic (arcB1) of Streptococcus agalactiae serotype III (strain NEM316).